Here is a 415-residue protein sequence, read N- to C-terminus: Thylakoid ADP,ATP carrier protein, chloroplastic (415 aa).

The N-terminal 61 residues, 1 to 61, are a transit peptide targeting the chloroplast; that stretch reads MGEEKSLLQF…NFASLSVAIR (61 aa). 5 helical membrane-spanning segments follow: residues 106 to 126, 182 to 207, 219 to 239, 273 to 293, and 309 to 329; these read IALL…AFAG, LPQV…KLFR, LGAG…LDVL, GPSL…FDLV, and LLTA…LDTI. 3 Solcar repeats span residues 113–205, 213–296, and 307–387; these read PKDA…YKKL, LSVL…VKKS, and SSLL…VKKL. Arginine 187 contacts ADP. Arginine 330 contributes to the ADP binding site. The helical transmembrane segment at 362-388 threads the bilayer; it reads GFVPNALKSMPNSSIKLTTFDIVKKLI.

Belongs to the mitochondrial carrier (TC 2.A.29) family. In terms of tissue distribution, highly expressed in developing photosynthetic organs such as leaves, flower buds and green siliques. Also detected in roots, flowers, mature leaves and stems.

It localises to the plastid. The protein localises to the chloroplast thylakoid membrane. The protein resides in the chloroplast envelope. Its activity is regulated as follows. KM and Vmax values toward ATP only are increased by m-chlorocarbonyl cyanide phenylhydrazone (CCCP). The corresponding values for ADP are not affected. Functionally, specifically transports adenine nucleotides. Involved in the uptake of ATP into thylakoids in exchange for lumenal ADP. The protein is Thylakoid ADP,ATP carrier protein, chloroplastic (TAAC) of Arabidopsis thaliana (Mouse-ear cress).